Here is an 802-residue protein sequence, read N- to C-terminus: G-type lectin S-receptor-like serine/threonine-protein kinase At1g61550 (802 aa).

Residues 1-19 form the signal peptide; it reads MTRFACFLFSTLLLSFSYA. In terms of domain architecture, Bulb-type lectin spans 20 to 139; the sequence is AITPTSPLSI…VSGITLWQSF (120 aa). At 20–421 the chain is on the extracellular side; sequence AITPTSPLSI…EMGGNQRKKT (402 aa). N-linked (GlcNAc...) asparagine glycans are attached at residues Asn-48, Asn-89, Asn-112, Asn-231, and Asn-262. Residues 273–309 form the EGF-like domain; that stretch reads PANTCDFYGVCGPFGLCVMSIPPKCKCFKGFVPQFSE. Disulfide bonds link Cys-277/Cys-289 and Cys-283/Cys-297. 3 N-linked (GlcNAc...) asparagine glycosylation sites follow: Asn-315, Asn-331, and Asn-370. The 83-residue stretch at 328–410 folds into the PAN domain; the sequence is CQGNSTGRHV…GELLSIRLAS (83 aa). Cystine bridges form between Cys-363-Cys-384 and Cys-367-Cys-373. Residues 422-442 form a helical membrane-spanning segment; sequence IIASIVSISLFVTLASAAFGF. At 443–802 the chain is on the cytoplasmic side; sequence WRYRLKHNAI…EVTQSVVLGR (360 aa). The Protein kinase domain maps to 489 to 774; the sequence is FSLVNKLGQG…DLPLPKEPTF (286 aa). ATP is bound by residues 495–503 and Lys-517; that span reads LGQGGFGPV. A phosphoserine mark is found at Ser-523 and Ser-538. Residues 578–595 are caM-binding; it reads RKRVEIDWPKRFSIIQGI. Asp-614 serves as the catalytic Proton acceptor. Phosphoserine occurs at positions 618 and 631. A Phosphothreonine modification is found at Thr-648. Phosphoserine is present on Ser-691.

Belongs to the protein kinase superfamily. Ser/Thr protein kinase family.

It localises to the cell membrane. The catalysed reaction is L-seryl-[protein] + ATP = O-phospho-L-seryl-[protein] + ADP + H(+). It carries out the reaction L-threonyl-[protein] + ATP = O-phospho-L-threonyl-[protein] + ADP + H(+). In Arabidopsis thaliana (Mouse-ear cress), this protein is G-type lectin S-receptor-like serine/threonine-protein kinase At1g61550.